We begin with the raw amino-acid sequence, 1145 residues long: Protocadherin-19 (1145 aa).

The first 21 residues, 1–21 (MESLLLPVLLLLAVLWTQAAA), serve as a signal peptide directing secretion. Cadherin domains are found at residues 22–129 (LINL…APSF), 130–238 (PAAQ…NPVF), 239–346 (GEST…PPII), 350–453 (SVNS…HPHF), 454–563 (SKPY…TPVI), and 569–672 (INGT…QESM). The Extracellular segment spans residues 22 to 678 (LINLKYSVEE…QESMGSVNLS (657 aa)). Residues glutamate 31, glutamate 32, aspartate 88, and aspartate 90 each coordinate Ca(2+). Cysteine 93 and cysteine 99 are oxidised to a cystine. Ca(2+) is bound by residues aspartate 121, asparagine 123, aspartate 124, asparagine 125, glutamate 140, aspartate 155, aspartate 157, glutamate 199, aspartate 212, aspartate 230, serine 231, asparagine 232, aspartate 233, asparagine 234, and glutamate 249. Asparagine 261 carries N-linked (GlcNAc...) asparagine glycosylation. The Ca(2+) site is built by aspartate 264, aspartate 266, asparagine 270, aspartate 305, glutamate 307, aspartate 338, asparagine 340, aspartate 341, asparagine 342, glutamate 360, aspartate 375, aspartate 377, asparagine 381, aspartate 412, and glutamate 414. A glycan (N-linked (GlcNAc...) asparagine) is linked at asparagine 420. 13 residues coordinate Ca(2+): aspartate 427, aspartate 445, glutamate 446, asparagine 447, aspartate 448, asparagine 449, glutamate 464, aspartate 479, aspartate 481, asparagine 485, asparagine 522, glutamate 524, and aspartate 537. An N-linked (GlcNAc...) asparagine glycan is attached at asparagine 485. The N-linked (GlcNAc...) asparagine glycan is linked to asparagine 546. Residues aspartate 555, valine 556, asparagine 557, aspartate 558, and asparagine 559 each coordinate Ca(2+). Asparagine 570 carries an N-linked (GlcNAc...) asparagine glycan. Aspartate 594, aspartate 596, asparagine 600, and aspartate 646 together coordinate Ca(2+). N-linked (GlcNAc...) asparagine glycosylation occurs at asparagine 676. The helical transmembrane segment at 679–699 (LIFIIALGSIAGILFVTMIFV) threads the bilayer. Residues 700 to 1145 (AIKCKRDNKE…SVKRLKDIVL (446 aa)) are Cytoplasmic-facing. Disordered regions lie at residues 901–921 (GNSL…EHDV) and 1094–1145 (LEHH…DIVL). Composition is skewed to basic and acidic residues over residues 906–921 (DSGH…EHDV) and 1106–1145 (SEAE…DIVL).

Homodimer; antiparallel.

The protein localises to the cell membrane. Its function is as follows. Calcium-dependent cell-adhesion protein. This is Protocadherin-19 (Pcdh19) from Mus musculus (Mouse).